The chain runs to 205 residues: SCO2-like protein RF_0960 (205 aa).

Residues cysteine 82, cysteine 86, and histidine 172 each coordinate Cu cation.

This sequence belongs to the SCO1/2 family.

The chain is SCO2-like protein RF_0960 from Rickettsia felis (strain ATCC VR-1525 / URRWXCal2) (Rickettsia azadi).